Reading from the N-terminus, the 77-residue chain is Short neurotoxin OH-32 (77 aa).

The N-terminal stretch at 1–21 (MKNLLLTFLVVTIVCLDLGYT) is a signal peptide. Disulfide bonds link Cys24–Cys40, Cys33–Cys58, Cys62–Cys70, and Cys71–Cys76.

The protein belongs to the three-finger toxin family. Short-chain subfamily. Expressed by the venom gland.

Its subcellular location is the secreted. In terms of biological role, this three-finger toxin binds and inhibits the nicotinic acetylcholine receptor (nAChR). The sequence is that of Short neurotoxin OH-32 from Ophiophagus hannah (King cobra).